Here is a 193-residue protein sequence, read N- to C-terminus: Non-specific lipid transfer protein GPI-anchored 10 (193 aa).

The first 24 residues, 1–24 (MASSTLLITLLISLSAFFLRMVLA), serve as a signal peptide directing secretion. Cystine bridges form between C30/C71, C40/C55, C56/C98, and C69/C107. N-linked (GlcNAc...) asparagine glycosylation is found at N76, N87, and N103. A disordered region spans residues 109-140 (SSFPGEAPSDSSSVAPPPSSSTGSQISQGAKN). Residues 116-132 (PSDSSSVAPPPSSSTGS) are compositionally biased toward low complexity. N-linked (GlcNAc...) asparagine glycosylation is present at N140. Residue S168 is the site of GPI-anchor amidated serine attachment. Positions 169–193 (SGSKSEIQLTIFALAAILPAALLLI) are cleaved as a propeptide — removed in mature form.

The protein belongs to the plant LTP family.

It localises to the cell membrane. Probable lipid transfer protein. The chain is Non-specific lipid transfer protein GPI-anchored 10 from Arabidopsis thaliana (Mouse-ear cress).